Reading from the N-terminus, the 311-residue chain is Pyrimidine-specific ribonucleoside hydrolase RihA (311 aa).

H240 is a catalytic residue.

The protein belongs to the IUNH family. RihA subfamily.

Its function is as follows. Hydrolyzes with equal efficiency cytidine or uridine to ribose and cytosine or uracil, respectively. The chain is Pyrimidine-specific ribonucleoside hydrolase RihA from Escherichia coli O81 (strain ED1a).